The following is a 494-amino-acid chain: DEAD-box ATP-dependent RNA helicase CshA (494 aa).

The Q motif signature appears at 3–31 (ITFQDFNLSSDLMKAINRMGFEEATPIQA). Residues 34–204 (IPLGLSNKDV…ERFMTEPEHV (171 aa)) form the Helicase ATP-binding domain. 47–54 (AQTGTGKT) contacts ATP. A DEAD box motif is present at residues 152–155 (DEAD). One can recognise a Helicase C-terminal domain in the interval 215 to 375 (NIQQFYLEVQ…RMKEPTLDEA (161 aa)). Residues 413–494 (VTVVAAAIKM…SGDRRQKKSY (82 aa)) are required for dimerization or oligomerization. Residues 429 to 494 (DTPVRLTDEA…SGDRRQKKSY (66 aa)) form a disordered region. Over residues 443–452 (KRYKNQRSSK) the composition is skewed to basic residues. The segment covering 473–488 (SYDKKRSNDRRSSGDR) has biased composition (basic and acidic residues).

The protein belongs to the DEAD box helicase family. CshA subfamily. As to quaternary structure, homodimer or oligomer. May interact with RNA helicases CshB and DbpA (DeaD). Probably a component of the RNA degradosome complex composed of rny, rnjA, rnjB, pnp, pfkA and eno, and possibly also rnpA (although rnjA and rnjB's presence is unclear). Interacts with ribosomal proteins L1 and L3 (rplA and rplC) and the protein component of RNase RnpA. Interacts with the RNA polymerase core. The cofactor is Mg(2+).

The protein resides in the cytoplasm. The protein localises to the nucleoid. Its subcellular location is the cell membrane. It catalyses the reaction ATP + H2O = ADP + phosphate + H(+). RNA helicase activity is inhibited by EDTA. The most abundant DEAD-box RNA helicase. An ATP-dependent RNA helicase with RNA-dependent ATPase activity. May work in conjunction with the cold shock proteins to ensure proper initiation of transcription at low and optimal temperatures. In vitro, unwinds dsRNA in both 5'- and 3'- directions. Plays a role in ribosomal 50S subunit assembly. Its deletion leads to changes in mRNA levels for over 200 transcripts. This Bacillus subtilis (strain 168) protein is DEAD-box ATP-dependent RNA helicase CshA.